An 85-amino-acid polypeptide reads, in one-letter code: Large ribosomal subunit protein bL27 (85 aa).

Positions 1 to 23 (MAHKKGQGSTQNNRDSAGRRLGV) are disordered.

The protein belongs to the bacterial ribosomal protein bL27 family.

This Helicobacter hepaticus (strain ATCC 51449 / 3B1) protein is Large ribosomal subunit protein bL27.